A 265-amino-acid polypeptide reads, in one-letter code: Type III pantothenate kinase (265 aa).

9-16 (DAGNSRIK) is an ATP binding site. Residues Tyr-96 and 103 to 106 (GSDR) contribute to the substrate site. The active-site Proton acceptor is the Asp-105. Thr-129 provides a ligand contact to ATP. Thr-189 provides a ligand contact to substrate.

Belongs to the type III pantothenate kinase family. As to quaternary structure, homodimer. It depends on NH4(+) as a cofactor. K(+) is required as a cofactor.

It is found in the cytoplasm. The catalysed reaction is (R)-pantothenate + ATP = (R)-4'-phosphopantothenate + ADP + H(+). Its pathway is cofactor biosynthesis; coenzyme A biosynthesis; CoA from (R)-pantothenate: step 1/5. Catalyzes the phosphorylation of pantothenate (Pan), the first step in CoA biosynthesis. The protein is Type III pantothenate kinase of Burkholderia orbicola (strain AU 1054).